The primary structure comprises 262 residues: Acyl-[acyl-carrier-protein]--UDP-N-acetylglucosamine O-acyltransferase (262 aa).

It belongs to the transferase hexapeptide repeat family. LpxA subfamily. Homotrimer.

It is found in the cytoplasm. It carries out the reaction a (3R)-hydroxyacyl-[ACP] + UDP-N-acetyl-alpha-D-glucosamine = a UDP-3-O-[(3R)-3-hydroxyacyl]-N-acetyl-alpha-D-glucosamine + holo-[ACP]. It participates in glycolipid biosynthesis; lipid IV(A) biosynthesis; lipid IV(A) from (3R)-3-hydroxytetradecanoyl-[acyl-carrier-protein] and UDP-N-acetyl-alpha-D-glucosamine: step 1/6. Its function is as follows. Involved in the biosynthesis of lipid A, a phosphorylated glycolipid that anchors the lipopolysaccharide to the outer membrane of the cell. In Cronobacter sakazakii (strain ATCC BAA-894) (Enterobacter sakazakii), this protein is Acyl-[acyl-carrier-protein]--UDP-N-acetylglucosamine O-acyltransferase.